We begin with the raw amino-acid sequence, 393 residues long: NAD(P)H-quinone oxidoreductase subunit H, chloroplastic (393 aa).

The protein belongs to the complex I 49 kDa subunit family. In terms of assembly, NDH is composed of at least 16 different subunits, 5 of which are encoded in the nucleus.

Its subcellular location is the plastid. It is found in the chloroplast thylakoid membrane. The catalysed reaction is a plastoquinone + NADH + (n+1) H(+)(in) = a plastoquinol + NAD(+) + n H(+)(out). It catalyses the reaction a plastoquinone + NADPH + (n+1) H(+)(in) = a plastoquinol + NADP(+) + n H(+)(out). Its function is as follows. NDH shuttles electrons from NAD(P)H:plastoquinone, via FMN and iron-sulfur (Fe-S) centers, to quinones in the photosynthetic chain and possibly in a chloroplast respiratory chain. The immediate electron acceptor for the enzyme in this species is believed to be plastoquinone. Couples the redox reaction to proton translocation, and thus conserves the redox energy in a proton gradient. In Gossypium hirsutum (Upland cotton), this protein is NAD(P)H-quinone oxidoreductase subunit H, chloroplastic.